Reading from the N-terminus, the 259-residue chain is Tubulin-specific chaperone C (259 aa).

A C-CAP/cofactor C-like domain is found at 112-241; that stretch reads PEVYFENDTL…DEHPILDFTW (130 aa).

The protein belongs to the TBCC family.

It localises to the cytoplasm. Its subcellular location is the cytoskeleton. In terms of biological role, tubulin-folding protein; involved in the final step of the tubulin folding pathway. The sequence is that of Tubulin-specific chaperone C (cin2) from Schizosaccharomyces pombe (strain 972 / ATCC 24843) (Fission yeast).